The primary structure comprises 508 residues: DEAD-box ATP-dependent RNA helicase 8 (508 aa).

Positions 1-123 (MDPRARYPPG…LKLPPQDTRY (123 aa)) are disordered. Residues 18–53 (NPNYYNRGPPLQQQHNHHQQQQTSAPHHQQYVQRQP) show a composition bias toward low complexity. Residues 54–64 (QQHHHHNHHQQ) are compositionally biased toward basic residues. The short motif at 134-162 (NEFEDYFLKRELLMGIYEKGFERPSPIQE) is the Q motif element. Residues 165–335 (IPIALTGSDI…DKYLPKPYVI (171 aa)) form the Helicase ATP-binding domain. 178 to 185 (AKNGTGKT) is a binding site for ATP. A DEAD box motif is present at residues 283–286 (DEAD). In terms of domain architecture, Helicase C-terminal spans 345–505 (GITQFYAFVE…PIPPQIDQAI (161 aa)).

The protein belongs to the DEAD box helicase family. DDX6/DHH1 subfamily.

Its subcellular location is the cytoplasm. The protein localises to the P-body. It carries out the reaction ATP + H2O = ADP + phosphate + H(+). In terms of biological role, ATP-dependent RNA helicase involved in mRNA turnover, and more specifically in mRNA decapping. In Oryza sativa subsp. japonica (Rice), this protein is DEAD-box ATP-dependent RNA helicase 8.